Reading from the N-terminus, the 694-residue chain is Maintenance of telomere capping protein 4 (694 aa).

Basic and acidic residues predominate over residues Met1–Glu12. The disordered stretch occupies residues Met1–Val26. A compositionally biased stretch (polar residues) spans Gln13–Val26. Position 85 is a phosphoserine (Ser85). The segment covering Tyr211 to Ser222 has biased composition (low complexity). 3 disordered regions span residues Tyr211–Gln287, Ala325–Tyr437, and Lys465–Leu511. Residues Ser223–Val243 show a composition bias toward basic residues. The span at Arg244–Thr257 shows a compositional bias: polar residues. A Phosphothreonine modification is found at Thr263. Residues Met276–Gln287 are compositionally biased toward polar residues. A compositionally biased stretch (low complexity) spans Ser403 to Ser417. Residues Ile418–Tyr437 show a composition bias toward polar residues. The segment covering Leu471–Leu485 has biased composition (basic and acidic residues). 2 positions are modified to phosphoserine: Ser481 and Ser491. Tyr493 bears the Phosphotyrosine mark. A helical membrane pass occupies residues Arg655–Leu675.

The protein localises to the membrane. Its subcellular location is the cytoplasm. The polypeptide is Maintenance of telomere capping protein 4 (MTC4) (Saccharomyces cerevisiae (strain ATCC 204508 / S288c) (Baker's yeast)).